Here is a 383-residue protein sequence, read N- to C-terminus: Photosynthetic reaction center cytochrome c subunit (383 aa).

Residues 1–22 form the signal peptide; sequence MNLGKQLTLPAVAVVASVVLLG. C23 carries the N-palmitoyl cysteine lipid modification. The S-diacylglycerol cysteine moiety is linked to residue C23. Heme contacts are provided by M94, C107, C110, H111, M130, H144, C152, C155, H156, M236, C247, C250, H251, C307, C310, and H311. The interval 335–383 is disordered; that stretch reads PAEAAPATEEAPAAEAEAVEAAPVEEAAPAPVEQAAAPVEDAAPAPQQL.

As to quaternary structure, component of the photosynthetic reaction center composed of protein subunits L (PufL), M (PufM), H (PuhA) and cytochrome C (PufC). The reaction center interacts with light-harvesting antenna complex LH1. Binds 4 heme groups per subunit.

It is found in the cellular chromatophore membrane. The reaction center of purple bacteria contains a tightly bound cytochrome molecule which re-reduces the photo oxidized primary electron donor. The protein is Photosynthetic reaction center cytochrome c subunit (pufC) of Allochromatium vinosum (strain ATCC 17899 / DSM 180 / NBRC 103801 / NCIMB 10441 / D) (Chromatium vinosum).